A 237-amino-acid polypeptide reads, in one-letter code: MATDNVHIGEIEKFGSHAHRWWDPDGELKTLHAVNPLRMQFIQAHTSLAGRKAVDVGCGGGILTEALAKAGADALGIDLSEDLLGTAEEHCRESGLTVAYRQISAEALADSQPGEFDVVTCMEMLEHVPDPASVVAACTRLAKPGGTVFFSTLNRSLKAYLLAIVGAEYLLRMIPRGTHDFASFIRPSELSRWARDGGLDLAGMEGIGYNPITGQFHLTSDIGVNYLAAFRKPAAAG.

Residues Arg38, Gly57, Asp78, and Met122 each contribute to the S-adenosyl-L-methionine site.

The protein belongs to the methyltransferase superfamily. UbiG/COQ3 family.

It carries out the reaction a 3-demethylubiquinol + S-adenosyl-L-methionine = a ubiquinol + S-adenosyl-L-homocysteine + H(+). It catalyses the reaction a 3-(all-trans-polyprenyl)benzene-1,2-diol + S-adenosyl-L-methionine = a 2-methoxy-6-(all-trans-polyprenyl)phenol + S-adenosyl-L-homocysteine + H(+). It participates in cofactor biosynthesis; ubiquinone biosynthesis. In terms of biological role, O-methyltransferase that catalyzes the 2 O-methylation steps in the ubiquinone biosynthetic pathway. This Methylococcus capsulatus (strain ATCC 33009 / NCIMB 11132 / Bath) protein is Ubiquinone biosynthesis O-methyltransferase.